The sequence spans 264 residues: tRNA pseudouridine synthase A (264 aa).

The active-site Nucleophile is Asp-51. Position 109 (Tyr-109) interacts with substrate.

It belongs to the tRNA pseudouridine synthase TruA family. Homodimer.

The catalysed reaction is uridine(38/39/40) in tRNA = pseudouridine(38/39/40) in tRNA. Functionally, formation of pseudouridine at positions 38, 39 and 40 in the anticodon stem and loop of transfer RNAs. The protein is tRNA pseudouridine synthase A of Yersinia pseudotuberculosis serotype O:1b (strain IP 31758).